The chain runs to 589 residues: Aspartate--tRNA ligase 2 (589 aa).

E174 provides a ligand contact to L-aspartate. An aspartate region spans residues 198–201; the sequence is QITK. R220 serves as a coordination point for L-aspartate. ATP is bound by residues 220-222 and Q229; that span reads RDE. H443 contributes to the L-aspartate binding site. Residue E477 coordinates ATP. R484 contacts L-aspartate. Residue 529–532 coordinates ATP; it reads GLDR.

This sequence belongs to the class-II aminoacyl-tRNA synthetase family. Type 1 subfamily. In terms of assembly, homodimer.

It localises to the cytoplasm. The enzyme catalyses tRNA(Asp) + L-aspartate + ATP = L-aspartyl-tRNA(Asp) + AMP + diphosphate. Catalyzes the attachment of L-aspartate to tRNA(Asp) in a two-step reaction: L-aspartate is first activated by ATP to form Asp-AMP and then transferred to the acceptor end of tRNA(Asp). The polypeptide is Aspartate--tRNA ligase 2 (Streptococcus mutans serotype c (strain ATCC 700610 / UA159)).